A 445-amino-acid polypeptide reads, in one-letter code: ATP synthase subunit b-delta (445 aa).

The interval 1 to 168 (MSIFIGQLIG…PSSAVLEAGA (168 aa)) is ATP synthase subunit b. Residues 3-23 (IFIGQLIGFAVIVFILVKWVV) traverse the membrane as a helical segment. Residues 169–445 (SLNLRAASRE…LAAARTGLPD (277 aa)) form an ATP synthase subunit delta region.

In the N-terminal section; belongs to the ATPase B chain family. It in the C-terminal section; belongs to the ATPase delta chain family. In terms of assembly, F-type ATPases have 2 components, F(1) - the catalytic core - and F(0) - the membrane proton channel. F(1) has five subunits: alpha(3), beta(3), gamma(1), delta(1), epsilon(1). F(0) has three main subunits: a(1), b(2) and c(10-14). The alpha and beta chains form an alternating ring which encloses part of the gamma chain. F(1) is attached to F(0) by a central stalk formed by the gamma and epsilon chains, while a peripheral stalk is formed by the delta and b chains.

The protein localises to the cell membrane. Functionally, f(1)F(0) ATP synthase produces ATP from ADP in the presence of a proton or sodium gradient. F-type ATPases consist of two structural domains, F(1) containing the extramembraneous catalytic core and F(0) containing the membrane proton channel, linked together by a central stalk and a peripheral stalk. During catalysis, ATP synthesis in the catalytic domain of F(1) is coupled via a rotary mechanism of the central stalk subunits to proton translocation. This fusion protein includes a component of the F(0) channel (subunit b) and of the F(1) subunit (subunit delta). Two copies of subunit b and one of delta together form the peripheral 'stator' stalk which links F(1) to F(0). The protein is ATP synthase subunit b-delta (atpFH) of Mycolicibacterium vanbaalenii (strain DSM 7251 / JCM 13017 / BCRC 16820 / KCTC 9966 / NRRL B-24157 / PYR-1) (Mycobacterium vanbaalenii).